We begin with the raw amino-acid sequence, 381 residues long: ELMO domain-containing protein 3 (381 aa).

In terms of domain architecture, ELMO spans 170-324; sequence THGRVLQTIY…DLEALAKKSP (155 aa).

In terms of tissue distribution, both isoform 1 and isoform 2 are widely expressed.

Its subcellular location is the cell projection. It is found in the stereocilium. The protein resides in the kinocilium. It localises to the cytoplasm. The protein localises to the cytoskeleton. In terms of biological role, acts as a GTPase-activating protein (GAP) for ARL2 with low specific activity. The chain is ELMO domain-containing protein 3 (Elmod3) from Mus musculus (Mouse).